The chain runs to 275 residues: Beta-lactamase OXA-15 (275 aa).

Positions 1-21 are cleaved as a signal peptide; that stretch reads MAIRIFAILFSIFSLATFAHA. Catalysis depends on Ser-72, which acts as the Acyl-ester intermediate. Lys-75 is modified (N6-carboxylysine). A substrate-binding site is contributed by 210-212; sequence KTG.

The protein belongs to the class-D beta-lactamase family.

It carries out the reaction a beta-lactam + H2O = a substituted beta-amino acid. Its function is as follows. Hydrolyzes oxacillin, first-generation cephalosporins and ceftazidime. Does not hydrolyze cefotaxime or carbapenems. The chain is Beta-lactamase OXA-15 (bla) from Pseudomonas aeruginosa.